Consider the following 148-residue polypeptide: uncharacterized protein (148 aa).

One can recognise an ABC transmembrane type-1 domain in the interval 25-148 (LSIGLIFSLI…YSITNIFIYN (124 aa)). The next 3 helical transmembrane spans lie at 26-46 (SIGL…PLII), 60-80 (IVII…STYI), and 127-147 (ITRV…IFIY).

The protein localises to the cell membrane. This is an uncharacterized protein from Staphylococcus epidermidis.